Here is a 145-residue protein sequence, read N- to C-terminus: Large ribosomal subunit protein uL15 (145 aa).

The disordered stretch occupies residues 1-57; that stretch reads MKLNDLSPAPGSRREKHRPGRGIGSGLGKTGGRGHKGQTSRSGGTIAPGFEGGQQPL. The span at 21–31 shows a compositional bias: gly residues; it reads RGIGSGLGKTG.

Belongs to the universal ribosomal protein uL15 family. As to quaternary structure, part of the 50S ribosomal subunit.

Binds to the 23S rRNA. The protein is Large ribosomal subunit protein uL15 of Pseudomonas fluorescens (strain SBW25).